A 152-amino-acid polypeptide reads, in one-letter code: Deoxyuridine 5'-triphosphate nucleotidohydrolase (152 aa).

Substrate-binding positions include 71–73 (RSG), asparagine 84, 88–90 (LID), and methionine 98.

It belongs to the dUTPase family. Mg(2+) serves as cofactor.

The enzyme catalyses dUTP + H2O = dUMP + diphosphate + H(+). The protein operates within pyrimidine metabolism; dUMP biosynthesis; dUMP from dCTP (dUTP route): step 2/2. This enzyme is involved in nucleotide metabolism: it produces dUMP, the immediate precursor of thymidine nucleotides and it decreases the intracellular concentration of dUTP so that uracil cannot be incorporated into DNA. The chain is Deoxyuridine 5'-triphosphate nucleotidohydrolase from Haemophilus ducreyi (strain 35000HP / ATCC 700724).